The sequence spans 117 residues: Elafin (117 aa).

A signal peptide spans 1 to 22 (MRASSFLIVVVFLIAGTLVLEA). Residues 23–60 (AVTGVPVKGQDTVKGRVPFNGQDPVKGQVSVKGQDKVK) constitute a propeptide that is removed on maturation. 2 SVP-1 clotting repeats span residues 29 to 54 (VKGQ…VSVK) and 55 to 72 (GQDK…VSTK). Positions 29 to 72 (VKGQDTVKGRVPFNGQDPVKGQVSVKGQDKVKAQEPVKGPVSTK) are 2 X tandem repeats of SVP-1 like motif. Residues 69–117 (VSTKPGSCPIILIRCAMLNPPNRCLKDTDCPGIKKCCEGSCGMACFVPQ) form the WAP domain. 4 disulfide bridges follow: cysteine 76-cysteine 105, cysteine 83-cysteine 109, cysteine 92-cysteine 104, and cysteine 98-cysteine 113.

Its subcellular location is the secreted. Neutrophil and pancreatic elastase-specific inhibitor of skin. It may prevent elastase-mediated tissue proteolysis. Has been shown to inhibit the alpha-4-beta-2/CHRNA2-CHRNB2 nicotinic acetylcholine receptor and to produce a weak inhibition on Kv11.1/KCNH2/ERG1 and on the transient receptor potential cation channel subfamily V member 1 (TRPV1). This Homo sapiens (Human) protein is Elafin (PI3).